Reading from the N-terminus, the 513-residue chain is 2-isopropylmalate synthase (513 aa).

The Pyruvate carboxyltransferase domain occupies 4-268; that stretch reads IKIFDTTLRD…ETGIKTELIY (265 aa). 4 residues coordinate Mn(2+): Asp13, His203, His205, and Asn239. The tract at residues 392 to 513 is regulatory domain; it reads KLVHFHVHTG…GLLRKNGGAE (122 aa).

The protein belongs to the alpha-IPM synthase/homocitrate synthase family. LeuA type 1 subfamily. As to quaternary structure, homodimer. The cofactor is Mn(2+).

Its subcellular location is the cytoplasm. The enzyme catalyses 3-methyl-2-oxobutanoate + acetyl-CoA + H2O = (2S)-2-isopropylmalate + CoA + H(+). Its pathway is amino-acid biosynthesis; L-leucine biosynthesis; L-leucine from 3-methyl-2-oxobutanoate: step 1/4. In terms of biological role, catalyzes the condensation of the acetyl group of acetyl-CoA with 3-methyl-2-oxobutanoate (2-ketoisovalerate) to form 3-carboxy-3-hydroxy-4-methylpentanoate (2-isopropylmalate). The sequence is that of 2-isopropylmalate synthase from Thermotoga maritima (strain ATCC 43589 / DSM 3109 / JCM 10099 / NBRC 100826 / MSB8).